The chain runs to 883 residues: Collagen, type I, alpha 1b (883 aa).

Positions 1-883 (QMSYVDHSKS…LGGSNDVELR (883 aa)) are disordered. Residues 13–33 (PPQPGPMGPMGPRGPPGPPGS) are compositionally biased toward pro residues. Composition is skewed to low complexity over residues 34-57 (SGPQ…AMGS), 113-122 (VPGVMGARGR), and 129-140 (SGARGNDGNTGP). Gly residues-rich tracts occupy residues 147–161 (TGGE…GNEG) and 185–194 (GTDGGPGAKG). Low complexity-rich tracts occupy residues 195–205 (SPGAAGLAGAP), 214–223 (AQGAVGAPGP), and 230–248 (PGAS…PGPA). Positions 285–297 (GADGGAGGKGAPG) are enriched in gly residues. Low complexity-rich tracts occupy residues 310 to 326 (ATGE…PGSK) and 390 to 402 (VGAP…AGPA). The span at 415 to 424 (GAPGLGGPTG) shows a compositional bias: gly residues. The segment covering 425–444 (ARGAPGPAGNDGAKGEPGAA) has biased composition (low complexity). 2 stretches are compositionally biased toward gly residues: residues 445–454 (GAPGGLGAPG) and 478–487 (GGKGGDGAPG). Over residues 512-542 (AGPTGPRGETGPPGPAGFAGPPGADGQPGAK) the composition is skewed to low complexity. The span at 564 to 573 (GPKGGAGPPG) shows a compositional bias: gly residues. 3 stretches are compositionally biased toward low complexity: residues 574–584 (ATGFPGPAGRV), 717–726 (APGAVGPSGK), and 742–756 (SGPA…PAGA). The span at 757-771 (KGDRGEAGEAGDRGH) shows a compositional bias: basic and acidic residues. A compositionally biased stretch (low complexity) spans 792 to 812 (PAGASGPAGPRGPAGSNGAPG). Residues 821–836 (AGPPGPPGPAGPPGPP) show a composition bias toward pro residues.

The protein belongs to the fibrillar collagen family.

In Epinephelus costae (Goldblotch grouper), this protein is Collagen, type I, alpha 1b.